We begin with the raw amino-acid sequence, 364 residues long: tRNA/tmRNA (uracil-C(5))-methyltransferase (364 aa).

S-adenosyl-L-methionine contacts are provided by Gln-188, Tyr-216, Asn-221, Glu-237, and Asp-297. Catalysis depends on Cys-322, which acts as the Nucleophile. Residue Glu-356 is the Proton acceptor of the active site.

It belongs to the class I-like SAM-binding methyltransferase superfamily. RNA M5U methyltransferase family. TrmA subfamily.

It carries out the reaction uridine(54) in tRNA + S-adenosyl-L-methionine = 5-methyluridine(54) in tRNA + S-adenosyl-L-homocysteine + H(+). The enzyme catalyses uridine(341) in tmRNA + S-adenosyl-L-methionine = 5-methyluridine(341) in tmRNA + S-adenosyl-L-homocysteine + H(+). Functionally, dual-specificity methyltransferase that catalyzes the formation of 5-methyluridine at position 54 (m5U54) in all tRNAs, and that of position 341 (m5U341) in tmRNA (transfer-mRNA). This is tRNA/tmRNA (uracil-C(5))-methyltransferase from Mannheimia succiniciproducens (strain KCTC 0769BP / MBEL55E).